A 424-amino-acid polypeptide reads, in one-letter code: Double homeobox protein 4-like protein 2 (424 aa).

Residues 1-10 (MALPTPSDST) are compositionally biased toward polar residues. Disordered regions lie at residues 1–24 (MALPTPSDSTLPAEARGRGRRRRL), 72–102 (SRQLRQHRRESRPWPGRRGPPEGRRKRTAVT), 148–167 (RHPGQGGRAPAQAGGLCSAA), 218–362 (LQPS…LQEP), and 388–414 (QPLLETEAPGELEASEEAASLEAPLSE). DNA-binding regions (homeobox) lie at residues 19–78 (GRRR…LRQH) and 94–153 (GRRK…PGQG). The segment covering 265-274 (KSREDRDPQR) has biased composition (basic and acidic residues). 2 stretches are compositionally biased toward low complexity: residues 278–302 (PGPCAVAQPGPAQAGPQGQGVLAPP) and 319–329 (AGAAWEPQAGA).

The protein resides in the nucleus. May be involved in transcriptional regulation. The sequence is that of Double homeobox protein 4-like protein 2 (DUX4L2) from Homo sapiens (Human).